The primary structure comprises 238 residues: Ribitol-5-phosphate cytidylyltransferase 2 (238 aa).

CTP contacts are provided by residues 7–10 (LAGG) and 81–87 (GTDRNET).

Belongs to the IspD/TarI cytidylyltransferase family. TarI subfamily.

It catalyses the reaction D-ribitol 5-phosphate + CTP + H(+) = CDP-L-ribitol + diphosphate. It functions in the pathway cell wall biogenesis; poly(ribitol phosphate) teichoic acid biosynthesis. Functionally, catalyzes the transfer of the cytidylyl group of CTP to D-ribitol 5-phosphate. This is Ribitol-5-phosphate cytidylyltransferase 2 from Staphylococcus aureus (strain MRSA252).